We begin with the raw amino-acid sequence, 95 residues long: Large ribosomal subunit protein uL23 (95 aa).

This sequence belongs to the universal ribosomal protein uL23 family. As to quaternary structure, part of the 50S ribosomal subunit. Contacts protein L29, and trigger factor when it is bound to the ribosome.

One of the early assembly proteins it binds 23S rRNA. One of the proteins that surrounds the polypeptide exit tunnel on the outside of the ribosome. Forms the main docking site for trigger factor binding to the ribosome. This Shouchella clausii (strain KSM-K16) (Alkalihalobacillus clausii) protein is Large ribosomal subunit protein uL23.